The sequence spans 195 residues: Probable DNA-directed RNA polymerase subunit delta (195 aa).

The HTH HARE-type domain occupies 14 to 83 (LSMIEVARAI…GDNKWGLRSW (70 aa)). Acidic residues-rich tracts occupy residues 120–138 (DSDA…DAYE) and 145–195 (YDDE…TSEE). The interval 120-195 (DSDAIDYNAD…SDDDAETSEE (76 aa)) is disordered.

Belongs to the RpoE family. RNAP is composed of a core of 2 alpha, a beta and a beta' subunits. The core is associated with a delta subunit and one of several sigma factors.

Participates in both the initiation and recycling phases of transcription. In the presence of the delta subunit, RNAP displays an increased specificity of transcription, a decreased affinity for nucleic acids, and an increased efficiency of RNA synthesis because of enhanced recycling. In Streptococcus pneumoniae serotype 2 (strain D39 / NCTC 7466), this protein is Probable DNA-directed RNA polymerase subunit delta.